The chain runs to 239 residues: Ribosomal RNA small subunit methyltransferase G (239 aa).

Residues G77, F82, 128-129, and R147 contribute to the S-adenosyl-L-methionine site; that span reads AE. Residues 219 to 239 form a disordered region; that stretch reads KNTPKKYPRKPGTPNKSPIEG.

This sequence belongs to the methyltransferase superfamily. RNA methyltransferase RsmG family.

It is found in the cytoplasm. Specifically methylates the N7 position of guanine in position 535 of 16S rRNA. The protein is Ribosomal RNA small subunit methyltransferase G of Bacillus subtilis (strain 168).